The primary structure comprises 405 residues: Argininosuccinate synthase (405 aa).

12-20 serves as a coordination point for ATP; it reads AYSGGLDTS. L-citrulline contacts are provided by Tyr-90 and Ser-95. Gly-120 is a binding site for ATP. Thr-122, Asn-126, and Asp-127 together coordinate L-aspartate. Asn-126 lines the L-citrulline pocket. The L-citrulline site is built by Arg-130, Ser-179, Ser-188, Glu-265, and Tyr-277.

This sequence belongs to the argininosuccinate synthase family. Type 1 subfamily. Homotetramer.

The protein resides in the cytoplasm. It carries out the reaction L-citrulline + L-aspartate + ATP = 2-(N(omega)-L-arginino)succinate + AMP + diphosphate + H(+). It participates in amino-acid biosynthesis; L-arginine biosynthesis; L-arginine from L-ornithine and carbamoyl phosphate: step 2/3. The polypeptide is Argininosuccinate synthase (Clostridium perfringens (strain 13 / Type A)).